The chain runs to 242 residues: Ubiquinone biosynthesis O-methyltransferase (242 aa).

4 residues coordinate S-adenosyl-L-methionine: arginine 44, glycine 64, aspartate 85, and methionine 129.

This sequence belongs to the methyltransferase superfamily. UbiG/COQ3 family.

The catalysed reaction is a 3-demethylubiquinol + S-adenosyl-L-methionine = a ubiquinol + S-adenosyl-L-homocysteine + H(+). The enzyme catalyses a 3-(all-trans-polyprenyl)benzene-1,2-diol + S-adenosyl-L-methionine = a 2-methoxy-6-(all-trans-polyprenyl)phenol + S-adenosyl-L-homocysteine + H(+). It participates in cofactor biosynthesis; ubiquinone biosynthesis. Functionally, O-methyltransferase that catalyzes the 2 O-methylation steps in the ubiquinone biosynthetic pathway. This is Ubiquinone biosynthesis O-methyltransferase from Salmonella agona (strain SL483).